We begin with the raw amino-acid sequence, 343 residues long: Dihydroorotase (343 aa).

Positions 13 and 15 each coordinate Zn(2+). Residues 15–17 (HLR) and Asn41 each bind substrate. Zn(2+)-binding residues include Lys99, His136, and His174. Lys99 is subject to N6-carboxylysine. His136 contributes to the substrate binding site. Residue Leu219 participates in substrate binding. Asp247 contacts Zn(2+). Residue Asp247 is part of the active site. Substrate-binding residues include His251 and Ala263.

The protein belongs to the metallo-dependent hydrolases superfamily. DHOase family. Class II DHOase subfamily. In terms of assembly, homodimer. Zn(2+) is required as a cofactor.

The enzyme catalyses (S)-dihydroorotate + H2O = N-carbamoyl-L-aspartate + H(+). Its pathway is pyrimidine metabolism; UMP biosynthesis via de novo pathway; (S)-dihydroorotate from bicarbonate: step 3/3. In terms of biological role, catalyzes the reversible cyclization of carbamoyl aspartate to dihydroorotate. The chain is Dihydroorotase from Shewanella baltica (strain OS195).